The primary structure comprises 238 residues: NAD(P)H-hydrate epimerase (238 aa).

One can recognise a YjeF N-terminal domain in the interval 11-217; sequence AAALDKDLMS…EIHQKYNLQL (207 aa). Position 61–65 (61–65) interacts with (6S)-NADPHX; that stretch reads NNGGD. The K(+) site is built by Asn-62 and Asp-123. Residues 127–133 and Asp-156 each bind (6S)-NADPHX; that span reads GFSFTGS. Residue Ser-159 participates in K(+) binding.

The protein belongs to the NnrE/AIBP family. K(+) serves as cofactor.

It is found in the cytoplasm. The protein resides in the mitochondrion. It carries out the reaction (6R)-NADHX = (6S)-NADHX. The catalysed reaction is (6R)-NADPHX = (6S)-NADPHX. Its function is as follows. Catalyzes the epimerization of the S- and R-forms of NAD(P)HX, a damaged form of NAD(P)H that is a result of enzymatic or heat-dependent hydration. This is a prerequisite for the S-specific NAD(P)H-hydrate dehydratase to allow the repair of both epimers of NAD(P)HX. The polypeptide is NAD(P)H-hydrate epimerase (Sclerotinia sclerotiorum (strain ATCC 18683 / 1980 / Ss-1) (White mold)).